The chain runs to 124 residues: Hemoglobin subunit alpha (124 aa).

A Globin domain is found at 1–124 (PLSAADKTII…VAKALSSHYR (124 aa)). His-57 is a binding site for O2. Position 79 (His-79) interacts with heme b.

It belongs to the globin family. As to quaternary structure, hb 1 is a heterotetramer of two alpha and two beta-1 chains. Hb 2 is a heterotetramer of two alpha and two beta-2 chains. Hb 3 is a heterotetramer of two alpha and two beta-3 chains. Red blood cells (at protein level).

Functionally, involved in oxygen transport from gills to the various peripheral tissues. The protein is Hemoglobin subunit alpha of Somniosus microcephalus (Greenland sleeper shark).